Reading from the N-terminus, the 344-residue chain is uncharacterized protein (344 aa).

Residues 323–332 (KQQEQREQGR) are compositionally biased toward basic and acidic residues. Residues 323–344 (KQQEQREQGRRAAYLQQRGMER) are disordered.

This is an uncharacterized protein from Bacillus anthracis.